Here is a 417-residue protein sequence, read N- to C-terminus: Tyrosine--tRNA ligase (417 aa).

Position 39 (Tyr39) interacts with L-tyrosine. Residues 44–53 carry the 'HIGH' region motif; that stretch reads PTAPSLHAGG. Residues Tyr176 and Gln180 each coordinate L-tyrosine. A 'KMSKS' region motif is present at residues 236-240; the sequence is KMGKS. Lys239 is a binding site for ATP. The S4 RNA-binding domain occupies 350-417; that stretch reads IGVLALMVLA…KKRHVLIRPA (68 aa).

This sequence belongs to the class-I aminoacyl-tRNA synthetase family. TyrS type 1 subfamily. As to quaternary structure, homodimer.

The protein resides in the cytoplasm. The enzyme catalyses tRNA(Tyr) + L-tyrosine + ATP = L-tyrosyl-tRNA(Tyr) + AMP + diphosphate + H(+). Its function is as follows. Catalyzes the attachment of tyrosine to tRNA(Tyr) in a two-step reaction: tyrosine is first activated by ATP to form Tyr-AMP and then transferred to the acceptor end of tRNA(Tyr). The chain is Tyrosine--tRNA ligase from Brucella suis biovar 1 (strain 1330).